A 233-amino-acid polypeptide reads, in one-letter code: Pyridoxal phosphate homeostasis protein (233 aa).

Lys36 bears the N6-(pyridoxal phosphate)lysine mark.

It belongs to the pyridoxal phosphate-binding protein YggS/PROSC family.

In terms of biological role, pyridoxal 5'-phosphate (PLP)-binding protein, which is involved in PLP homeostasis. This Vibrio alginolyticus protein is Pyridoxal phosphate homeostasis protein.